A 405-amino-acid chain; its full sequence is Serine/threonine transporter SstT (405 aa).

Transmembrane regions (helical) follow at residues 13-33 (GNLV…ATFS), 43-63 (IGNL…FILV), 81-101 (IVVL…ILSF), 140-160 (ALMN…GLAL), 191-211 (FGIF…ALAG), 215-235 (LLAV…PMIV), 297-317 (MAGA…TMGI), 338-358 (ASGV…LFGI), and 362-382 (IAMQ…SAET).

This sequence belongs to the dicarboxylate/amino acid:cation symporter (DAACS) (TC 2.A.23) family.

The protein resides in the cell inner membrane. It catalyses the reaction L-serine(in) + Na(+)(in) = L-serine(out) + Na(+)(out). It carries out the reaction L-threonine(in) + Na(+)(in) = L-threonine(out) + Na(+)(out). Its function is as follows. Involved in the import of serine and threonine into the cell, with the concomitant import of sodium (symport system). This is Serine/threonine transporter SstT from Vibrio cholerae serotype O1 (strain ATCC 39315 / El Tor Inaba N16961).